The following is a 579-amino-acid chain: Probable cytochrome c oxidase subunit 1-alpha (579 aa).

Residues 1 to 21 are disordered; sequence MSILNEPQGAAAAEDSYENEL. Residues 44–64 form a helical membrane-spanning segment; the sequence is IGTLYLVTSFAFFCIGGVMAL. Residue His90 participates in Fe(II)-heme a binding. 6 helical membrane-spanning segments follow: residues 93 to 113, 125 to 145, 174 to 194, 217 to 237, 262 to 282, and 295 to 315; these read IMLLMFATPLFAGFANWIMPL, LNMFAYWLYLFGSLIAVGGFL, MWIMGLAFSGFGTILGSVNFI, VLLTGVLVLLAFPVLAAALFA, LFWFFGHPEVYIIALPFFGII, and FGYMGLIGATIAIAGLSVTVW. Cu cation-binding residues include His268 and Tyr272. A cross-link (1'-histidyl-3'-tyrosine (His-Tyr)) is located at residues 268 to 272; sequence HPEVY. Cu cation-binding residues include His317 and His318. The next 5 helical transmembrane spans lie at 319–339, 363–383, 397–417, 437–457, and 480–500; these read MYVTGGVLLPFFSFMTFLIAV, MLWATGFLITFTFGGLTGVIL, FVVAHFHYVVFGTVVFAMFSG, ITFWTLFVGFHGTFLIQHWLG, and ISTICSFLLGLSILPFLYNVW. His401 is a heme a3 binding site. His403 is a Fe(II)-heme a binding site.

Belongs to the heme-copper respiratory oxidase family. As to quaternary structure, associates with subunits II, III and IV to form cytochrome c oxidase. Cu(2+) serves as cofactor. Requires heme as cofactor.

The protein localises to the cell membrane. It carries out the reaction 4 Fe(II)-[cytochrome c] + O2 + 8 H(+)(in) = 4 Fe(III)-[cytochrome c] + 2 H2O + 4 H(+)(out). Its pathway is energy metabolism; oxidative phosphorylation. Cytochrome c oxidase is the component of the respiratory chain that catalyzes the reduction of oxygen to water. Subunits 1-3 form the functional core of the enzyme complex. CO I is the catalytic subunit of the enzyme. Electrons originating in cytochrome c are transferred via the copper A center of subunit 2 and heme A of subunit 1 to the bimetallic center formed by heme A3 and copper B. The sequence is that of Probable cytochrome c oxidase subunit 1-alpha (ctaD1) from Streptomyces avermitilis (strain ATCC 31267 / DSM 46492 / JCM 5070 / NBRC 14893 / NCIMB 12804 / NRRL 8165 / MA-4680).